The following is a 238-amino-acid chain: MAAPTQLPETAKPKHSNQSEAGPAPLASPTAPMPRPASHLAPMPSDHPDFRSKSARLRCQPPRTNNCGTFKQPPSVAATSRPKPGNPFLQPPTKGTPPPKKKKKNHTEGCHTHEANPEPNTKHTETESPKPQTSTQHHTPITIPSSLLSQNTQREKRGLPLLTSRPSTIPANTYQPQSPHIHSHTPLQRPISTALLHQNLHIRARNIRHTGRLHGSPTKGAQTAQQAQPHPPKQLATL.

Disordered stretches follow at residues 1–154 (MAAP…NTQR) and 211–238 (GRLH…LATL). The segment covering 106–128 (HTEGCHTHEANPEPNTKHTETES) has biased composition (basic and acidic residues). Residues 129 to 152 (PKPQTSTQHHTPITIPSSLLSQNT) are compositionally biased toward polar residues.

The protein belongs to the UPF0328 family.

This chain is UPF0328 protein ECU07_0010, found in Encephalitozoon cuniculi (strain GB-M1) (Microsporidian parasite).